We begin with the raw amino-acid sequence, 76 residues long: Sec-independent protein translocase protein TatA (76 aa).

A helical transmembrane segment spans residues 1–21 (MGGLSIWHWLIVLLIVALVFG). The disordered stretch occupies residues 43-76 (MKDGDAPADAQQLPRSGTVDVNAKEATRSDSNKA). Residues 64–76 (NAKEATRSDSNKA) are compositionally biased toward basic and acidic residues.

This sequence belongs to the TatA/E family. As to quaternary structure, the Tat system comprises two distinct complexes: a TatABC complex, containing multiple copies of TatA, TatB and TatC subunits, and a separate TatA complex, containing only TatA subunits. Substrates initially bind to the TatABC complex, which probably triggers association of the separate TatA complex to form the active translocon.

It is found in the cell inner membrane. Its function is as follows. Part of the twin-arginine translocation (Tat) system that transports large folded proteins containing a characteristic twin-arginine motif in their signal peptide across membranes. TatA could form the protein-conducting channel of the Tat system. The chain is Sec-independent protein translocase protein TatA from Burkholderia multivorans (strain ATCC 17616 / 249).